Consider the following 149-residue polypeptide: SsrA-binding protein (149 aa).

It belongs to the SmpB family.

Its subcellular location is the cytoplasm. Its function is as follows. Required for rescue of stalled ribosomes mediated by trans-translation. Binds to transfer-messenger RNA (tmRNA), required for stable association of tmRNA with ribosomes. tmRNA and SmpB together mimic tRNA shape, replacing the anticodon stem-loop with SmpB. tmRNA is encoded by the ssrA gene; the 2 termini fold to resemble tRNA(Ala) and it encodes a 'tag peptide', a short internal open reading frame. During trans-translation Ala-aminoacylated tmRNA acts like a tRNA, entering the A-site of stalled ribosomes, displacing the stalled mRNA. The ribosome then switches to translate the ORF on the tmRNA; the nascent peptide is terminated with the 'tag peptide' encoded by the tmRNA and targeted for degradation. The ribosome is freed to recommence translation, which seems to be the essential function of trans-translation. This is SsrA-binding protein from Carboxydothermus hydrogenoformans (strain ATCC BAA-161 / DSM 6008 / Z-2901).